Reading from the N-terminus, the 349-residue chain is tRNA pseudouridine synthase D (349 aa).

Phe27 lines the substrate pocket. Asp80 functions as the Nucleophile in the catalytic mechanism. Residue Asn129 participates in substrate binding. A TRUD domain is found at 155–303 (GVPNYFGAQR…VEAARRAMLL (149 aa)). Phe329 lines the substrate pocket.

Belongs to the pseudouridine synthase TruD family.

The enzyme catalyses uridine(13) in tRNA = pseudouridine(13) in tRNA. Functionally, responsible for synthesis of pseudouridine from uracil-13 in transfer RNAs. The protein is tRNA pseudouridine synthase D of Escherichia coli O8 (strain IAI1).